A 587-amino-acid chain; its full sequence is uncharacterized protein (587 aa).

The region spanning 61–426 (GKGASKKAAL…DLPNWHHDAE (366 aa)) is the YcaO domain.

This is an uncharacterized protein from Haemophilus influenzae (strain ATCC 51907 / DSM 11121 / KW20 / Rd).